The following is a 319-amino-acid chain: Serine acetyltransferase, plasmid (319 aa).

It belongs to the transferase hexapeptide repeat family.

The protein resides in the cytoplasm. It carries out the reaction L-serine + acetyl-CoA = O-acetyl-L-serine + CoA. It participates in amino-acid biosynthesis; L-cysteine biosynthesis; L-cysteine from L-serine: step 1/2. This Synechococcus elongatus (strain ATCC 33912 / PCC 7942 / FACHB-805) (Anacystis nidulans R2) protein is Serine acetyltransferase, plasmid (srpH).